Reading from the N-terminus, the 140-residue chain is uncharacterized protein (140 aa).

Positions 1–22 are cleaved as a signal peptide; that stretch reads MRLRWQTIVLLLLILGGASASA.

This is an uncharacterized protein from Archaeoglobus fulgidus (strain ATCC 49558 / DSM 4304 / JCM 9628 / NBRC 100126 / VC-16).